The chain runs to 303 residues: N-acetyl-D-glucosamine kinase (303 aa).

ATP-binding positions include 4-11 (GFDIGGTK) and 133-140 (GVGGGLVL). His-157, Cys-177, Cys-179, and Cys-184 together coordinate Zn(2+).

The protein belongs to the ROK (NagC/XylR) family. NagK subfamily.

It carries out the reaction N-acetyl-D-glucosamine + ATP = N-acetyl-D-glucosamine 6-phosphate + ADP + H(+). It participates in cell wall biogenesis; peptidoglycan recycling. Its function is as follows. Catalyzes the phosphorylation of N-acetyl-D-glucosamine (GlcNAc) derived from cell-wall degradation, yielding GlcNAc-6-P. The protein is N-acetyl-D-glucosamine kinase of Salmonella gallinarum (strain 287/91 / NCTC 13346).